A 671-amino-acid polypeptide reads, in one-letter code: Transcriptional regulator Kaiso (671 aa).

The interval 1–103 (MESRKLISAT…RADLLDELIK (103 aa)) is interaction with NCOR1. Residues 1–136 (MESRKLISAT…SGTEQDGTAE (136 aa)) are self-association. Positions 32–94 (CDVTVIVEDR…IYSSKVVRVR (63 aa)) constitute a BTB domain. The span at 127 to 144 (SGTEQDGTAETLPSSSSD) shows a compositional bias: polar residues. Residues 127-161 (SGTEQDGTAETLPSSSSDKSLDMEKSKDEAQDNGA) are disordered. The segment covering 145–156 (KSLDMEKSKDEA) has biased composition (basic and acidic residues). Residues Lys151 and Lys153 each participate in a glycyl lysine isopeptide (Lys-Gly) (interchain with G-Cter in SUMO2) cross-link. Thr251 is subject to Phosphothreonine. The segment at 298-571 (LPNHMSSSVN…FMSSHIKSVH (274 aa)) is interaction with CBFA2T3. The tract at residues 332–365 (IIDDDDDIISSSPDSAVSNTSLVPQADNSKSTTL) is disordered. The segment covering 347-365 (AVSNTSLVPQADNSKSTTL) has biased composition (polar residues). Glycyl lysine isopeptide (Lys-Gly) (interchain with G-Cter in SUMO2) cross-links involve residues Lys388, Lys405, Lys412, and Lys447. Residues 451-461 (DGGEAKLDNEL) show a composition bias toward basic and acidic residues. The interval 451-474 (DGGEAKLDNELPKTSGSEPPNKRM) is disordered. The interaction with CTNND1 stretch occupies residues 452–671 (GGEAKLDNEL…EFEFIIPESY (220 aa)). Glycyl lysine isopeptide (Lys-Gly) (interchain with G-Cter in SUMO2) cross-links involve residues Lys463, Lys472, and Lys477. The short motif at 469-478 (PPNKRMKVKH) is the Nuclear localization signal element. C2H2-type zinc fingers lie at residues 492–514 (YICI…FNIH), 520–542 (YQCR…EIHH), and 548–571 (YQCL…KSVH). Residues 512–637 (NIHSWEKKYQ…TSTPPQNKST (126 aa)) form a required for DNA-binding region. Residues Lys537, Lys568, Lys580, Lys609, and Lys616 each participate in a glycyl lysine isopeptide (Lys-Gly) (interchain with G-Cter in SUMO2) cross-link.

Interacts with NCOR1. Self-associates. Interacts with CTNND1, and this interaction inhibits binding to both methylated and non-methylated DNA. Interacts with CTNND2. Interacts with KPNA2/RCH1, which may mediate nuclear import of this protein. Interacts with CBFA2T3. Expressed in brain, heart, kidney, liver, lung, neuromuscular junctions, skeletal muscle, spleen and testis.

It is found in the nucleus. Transcriptional regulator with bimodal DNA-binding specificity. Binds to methylated CpG dinucleotides in the consensus sequence 5'-CGCG-3' and also binds to the non-methylated consensus sequence 5'-CTGCNA-3' also known as the consensus kaiso binding site (KBS). May recruit the N-CoR repressor complex to promote histone deacetylation and the formation of repressive chromatin structures in target gene promoters. Contributes to the repression of target genes of the Wnt signaling pathway. May also activate transcription of a subset of target genes by the recruitment of CTNND2. Represses expression of MMP7 in conjunction with transcriptional corepressors CBFA2T3, CBFA2T2 and RUNX1T1. This chain is Transcriptional regulator Kaiso (Zbtb33), found in Mus musculus (Mouse).